A 317-amino-acid chain; its full sequence is Inactive serine protease 45 (317 aa).

The first 35 residues, 1–35 (MATSLRGLDAGPGSLRRWILICFAALLLLPPRPNL), serve as a signal peptide directing secretion. N-linked (GlcNAc...) asparagine glycosylation is present at asparagine 40. One can recognise a Peptidase S1 domain in the interval 44–291 (PVCGTPWWPD…YTIWIKDQVS (248 aa)). Residues cysteine 75 and cysteine 91 are joined by a disulfide bond. The N-linked (GlcNAc...) asparagine glycan is linked to asparagine 110. 3 disulfide bridges follow: cysteine 172/cysteine 249, cysteine 207/cysteine 230, and cysteine 239/cysteine 267. N-linked (GlcNAc...) asparagine glycosylation occurs at asparagine 272.

It belongs to the peptidase S1 family.

It localises to the secreted. This is Inactive serine protease 45 from Mus musculus (Mouse).